Reading from the N-terminus, the 925-residue chain is Colossin-D (925 aa).

A signal peptide spans 1–26 (MIKVFKDLKFLILITIILLNLKSINC). Asn-47, Asn-95, Asn-142, Asn-166, Asn-283, Asn-334, Asn-344, Asn-378, Asn-401, Asn-511, and Asn-642 each carry an N-linked (GlcNAc...) asparagine glycan.

This sequence belongs to the serine-aspartate repeat-containing protein (SDr) family.

It localises to the secreted. This chain is Colossin-D (colD), found in Dictyostelium discoideum (Social amoeba).